The primary structure comprises 412 residues: Exodeoxyribonuclease 7 large subunit (412 aa).

The protein belongs to the XseA family. As to quaternary structure, heterooligomer composed of large and small subunits.

Its subcellular location is the cytoplasm. The catalysed reaction is Exonucleolytic cleavage in either 5'- to 3'- or 3'- to 5'-direction to yield nucleoside 5'-phosphates.. Functionally, bidirectionally degrades single-stranded DNA into large acid-insoluble oligonucleotides, which are then degraded further into small acid-soluble oligonucleotides. The sequence is that of Exodeoxyribonuclease 7 large subunit from Nostoc sp. (strain PCC 7120 / SAG 25.82 / UTEX 2576).